The following is a 724-amino-acid chain: Probable dipeptidyl-peptidase 5 (724 aa).

The first 19 residues, Met1 to Ala19, serve as a signal peptide directing secretion. N-linked (GlcNAc...) asparagine glycans are attached at residues Asn76, Asn97, Asn154, Asn257, Asn383, and Asn453. Residue Ser563 is the Charge relay system of the active site. An N-linked (GlcNAc...) asparagine glycan is attached at Asn610. Catalysis depends on charge relay system residues Asp646 and His678.

Belongs to the peptidase S9C family.

It is found in the secreted. In terms of biological role, extracellular dipeptidyl-peptidase which removes N-terminal dipeptides sequentially from polypeptides having unsubstituted N-termini. The protein is Probable dipeptidyl-peptidase 5 (dpp5) of Aspergillus clavatus (strain ATCC 1007 / CBS 513.65 / DSM 816 / NCTC 3887 / NRRL 1 / QM 1276 / 107).